The sequence spans 590 residues: Protein NRT1/ PTR FAMILY 6.3 (590 aa).

A run of 2 helical transmembrane segments spans residues 46-66 (LTTL…MHLG) and 77-97 (FLGT…TFLG). Phosphothreonine; by CIPK23 is present on Thr101. 10 helical membrane-spanning segments follow: residues 102–122 (IAIF…STII), 143–163 (GIQL…TGGV), 193–213 (FFFC…YVQD), 219–239 (WGYG…LAGT), 342–362 (MLPI…LTTL), 374–394 (IGSF…GLLL), 423–443 (IGLG…VELK), 460–480 (LGFY…ALIY), 501–521 (GLLL…VTIV), and 542–562 (YNFY…FLVF). Positions 356 and 360 each coordinate substrate.

Belongs to the major facilitator superfamily. Proton-dependent oligopeptide transporter (POT/PTR) (TC 2.A.17) family. In terms of assembly, monomer and homodimer. The dimer has the 2 monomers in the same orientation. Interacts with CIPK23. Post-translationally, acts as a high-affinity nitrate transporter when phosphorylated and as a low-affinity transporter when dephosphorylated. Forms homodimer when unphosphorylated and monomer when phosphorylated. Low nitrogen concentration in the medium stimulates phosphorylation. Phosphorylation also regulates the nitrate signaling. In terms of tissue distribution, expressed in the stele in lateral root primordia before emergence and in the tip of primary and emerged lateral roots. Detected in emerging and immature leaves, guard cells, flower buds, style, stigma, anthers and pollen grains. Not detected in the shoot apical meristem.

It is found in the membrane. Dual affinity nitrate transporter. Involved in proton-dependent nitrate uptake and in the regulation of the nitrate transporter NRT2.1. Also acts as a nitrate sensor that trigger a specific signaling pathway stimulating lateral root growth and seed germination. The uptake activity is not required for sensor function. Displays an auxin transport facilitation inhibited by high nitrate concentration. Required to prevent auxin accumulation in preemerged lateral root primordia and young lateral roots when external nitrate concentration is low or null. May be involved in the basipetal transport of auxin out of the lateral root tips. Acts as a bidirectional transporter involved in root-to-shoot nitrate translocation. Recognizes specifically nitrate and chlorate, but not nitrite, alanine, sulfate, phosphate or the di-peptide Ala-Ala. In Arabidopsis thaliana (Mouse-ear cress), this protein is Protein NRT1/ PTR FAMILY 6.3 (NPF6.3).